The primary structure comprises 261 residues: Hydroxyethylthiazole kinase (261 aa).

Substrate is bound at residue Met40. ATP contacts are provided by Lys116 and Thr162. Gly189 contacts substrate.

Belongs to the Thz kinase family. Mg(2+) serves as cofactor.

The catalysed reaction is 5-(2-hydroxyethyl)-4-methylthiazole + ATP = 4-methyl-5-(2-phosphooxyethyl)-thiazole + ADP + H(+). Its pathway is cofactor biosynthesis; thiamine diphosphate biosynthesis; 4-methyl-5-(2-phosphoethyl)-thiazole from 5-(2-hydroxyethyl)-4-methylthiazole: step 1/1. Its function is as follows. Catalyzes the phosphorylation of the hydroxyl group of 4-methyl-5-beta-hydroxyethylthiazole (THZ). This chain is Hydroxyethylthiazole kinase, found in Methanosarcina mazei (strain ATCC BAA-159 / DSM 3647 / Goe1 / Go1 / JCM 11833 / OCM 88) (Methanosarcina frisia).